A 1064-amino-acid chain; its full sequence is Isoleucine--tRNA ligase, cytoplasmic (1064 aa).

The 'HIGH' region signature appears at 42–52; it reads PFATGRPHHGH. Residues 597-601 carry the 'KMSKS' region motif; sequence KMSKR. Residue K600 coordinates ATP.

This sequence belongs to the class-I aminoacyl-tRNA synthetase family.

Its subcellular location is the cytoplasm. It carries out the reaction tRNA(Ile) + L-isoleucine + ATP = L-isoleucyl-tRNA(Ile) + AMP + diphosphate. This Schizosaccharomyces pombe (strain 972 / ATCC 24843) (Fission yeast) protein is Isoleucine--tRNA ligase, cytoplasmic (irs1).